The sequence spans 272 residues: Putative hydro-lyase RPB_3621 (272 aa).

It belongs to the D-glutamate cyclase family.

This is Putative hydro-lyase RPB_3621 from Rhodopseudomonas palustris (strain HaA2).